A 964-amino-acid chain; its full sequence is Phosphoenolpyruvate carboxylase (964 aa).

Serine 11 carries the phosphoserine modification. Active-site residues include histidine 172 and lysine 600.

The protein belongs to the PEPCase type 1 family. Homotetramer. The cofactor is Mg(2+).

It localises to the cytoplasm. The catalysed reaction is oxaloacetate + phosphate = phosphoenolpyruvate + hydrogencarbonate. It functions in the pathway photosynthesis; C4 acid pathway. By light-reversible phosphorylation. Through the carboxylation of phosphoenolpyruvate (PEP) it forms oxaloacetate, a four-carbon dicarboxylic acid source for the tricarboxylic acid cycle. The chain is Phosphoenolpyruvate carboxylase (PPC) from Nicotiana tabacum (Common tobacco).